We begin with the raw amino-acid sequence, 555 residues long: Exodeoxyribonuclease 7 large subunit (555 aa).

The protein belongs to the XseA family. Heterooligomer composed of large and small subunits.

The protein resides in the cytoplasm. The catalysed reaction is Exonucleolytic cleavage in either 5'- to 3'- or 3'- to 5'-direction to yield nucleoside 5'-phosphates.. Its function is as follows. Bidirectionally degrades single-stranded DNA into large acid-insoluble oligonucleotides, which are then degraded further into small acid-soluble oligonucleotides. In Chlamydia felis (strain Fe/C-56) (Chlamydophila felis), this protein is Exodeoxyribonuclease 7 large subunit.